The primary structure comprises 430 residues: Pre-B-cell leukemia transcription factor 1 (430 aa).

The disordered stretch occupies residues 1–40; the sequence is MDEQPRLMHSHAGVGMAGHPGLSQHLQDGAGGTEGEGGRK. The PBC domain maps to 38 to 232; it reads GRKQDIGDIL…VMILRSRFLD (195 aa). The tract at residues 45 to 124 is PBC-A; that stretch reads DILQQIMTIT…EGVAGPEKGG (80 aa). A PBC-B region spans residues 127–232; it reads AAAAAAAAAS…VMILRSRFLD (106 aa). A DNA-binding region (homeobox; TALE-type) is located at residues 233-295; it reads ARRKRRNFNK…NKRIRYKKNI (63 aa). Disordered regions lie at residues 317-338 and 395-430; these read SAHG…SSSF and SPQG…DTSN. A compositionally biased stretch (low complexity) spans 323–338; it reads ANSPSTPNSAGSSSSF. Over residues 407–418 the composition is skewed to polar residues; sequence DATTPSSVTSPT.

It belongs to the TALE/PBX homeobox family. Forms a heterodimer with MEIS1 which binds DNA. The PBX1-MEIS1 heterodimer binds a cAMP-responsive sequence in CYP17. It also binds a consensus region in the SOX3 promoter. PBX1 forms heterotrimers with MEIS1 and a number of HOX proteins including HOXA9, HOXD4, HOXD9 and HOXD10. Forms heterodimers with HOXA1, HOXA5, HOXB7 and HOXB8 which bind the 5'-TGATTGAT-3' consensus sequence. Also forms heterodimers with HOXA5, HOXB7, HOXB8, HOXC8 and HOXD4 which bind the 5'-ATCAATCAA-3' consensus sequence. Interacts with PBXIP1. Interacts with TLX1. Interacts with FOXC1. Interacts with MN1. In terms of assembly, interacts with MEIS2 isoform 4, SP1, SP3 and KLF4. As to quaternary structure, part of a PDX1:PBX1b:MEIS2B complex; PBX1b recruits MEIS2B to the complex. Expressed in the kidney. Expressed in the endothelial cells of the glomeruli and interstitium (at protein level). Expressed in all tissues except in cells of the B and T lineage. Expressed strongly in kidney and brain.

The protein localises to the nucleus. Its function is as follows. Transcription factor which binds the DNA sequence 5'-TGATTGAT-3' as part of a heterodimer with HOX proteins such as HOXA1, HOXA5, HOXB7 and HOXB8. Binds to the DNA sequence 5'-TGATTGAC-3' in complex with a nuclear factor which is not a class I HOX protein. Has also been shown to bind the DNA sequence 5'-ATCAATCAA-3' cooperatively with HOXA5, HOXB7, HOXB8, HOXC8 and HOXD4. Acts as a transcriptional activator of PF4 in complex with MEIS1. Also activates transcription of SOX3 in complex with MEIS1 by binding to the 5'-TGATTGAC-3' consensus sequence. In natural killer cells, binds to the NFIL3 promoter and acts as a transcriptional activator of NFIL3, promoting natural killer cell development. Plays a role in the cAMP-dependent regulation of CYP17A1 gene expression via its cAMP-regulatory sequence (CRS1). Probably in complex with MEIS2, involved in transcriptional regulation by KLF4. Acts as a transcriptional activator of NKX2-5 and a transcriptional repressor of CDKN2B. Together with NKX2-5, required for spleen development through a mechanism that involves CDKN2B repression. As part of a PDX1:PBX1b:MEIS2B complex in pancreatic acinar cells, is involved in the transcriptional activation of the ELA1 enhancer; the complex binds to the enhancer B element and cooperates with the transcription factor 1 complex (PTF1) bound to the enhancer A element. The sequence is that of Pre-B-cell leukemia transcription factor 1 (PBX1) from Homo sapiens (Human).